The sequence spans 543 residues: Glutamyl-tRNA(Gln) amidotransferase subunit A, chloroplastic/mitochondrial (543 aa).

Catalysis depends on charge relay system residues Lys121 and Ser196. Ser220 functions as the Acyl-ester intermediate in the catalytic mechanism.

The protein belongs to the amidase family. GatA subfamily. As to quaternary structure, subunit of the heterotrimeric GatCAB amidotransferase (AdT) complex, composed of A, B and C subunits.

The protein resides in the mitochondrion. The protein localises to the plastid. It is found in the chloroplast stroma. The catalysed reaction is L-glutamyl-tRNA(Gln) + L-glutamine + ATP + H2O = L-glutaminyl-tRNA(Gln) + L-glutamate + ADP + phosphate + H(+). Allows the formation of correctly charged Gln-tRNA(Gln) through the transamidation of misacylated Glu-tRNA(Gln) in chloroplasts and mitochondria. The reaction takes place in the presence of glutamine and ATP through an activated gamma-phospho-Glu-tRNA(Gln). The sequence is that of Glutamyl-tRNA(Gln) amidotransferase subunit A, chloroplastic/mitochondrial from Zea mays (Maize).